The chain runs to 202 residues: Imidazoleglycerol-phosphate dehydratase (202 aa).

This sequence belongs to the imidazoleglycerol-phosphate dehydratase family.

Its subcellular location is the cytoplasm. The catalysed reaction is D-erythro-1-(imidazol-4-yl)glycerol 3-phosphate = 3-(imidazol-4-yl)-2-oxopropyl phosphate + H2O. The protein operates within amino-acid biosynthesis; L-histidine biosynthesis; L-histidine from 5-phospho-alpha-D-ribose 1-diphosphate: step 6/9. This Chelativorans sp. (strain BNC1) protein is Imidazoleglycerol-phosphate dehydratase.